A 303-amino-acid polypeptide reads, in one-letter code: Bifunctional protein FolD (303 aa).

Residues 175–177 and Ile-243 each bind NADP(+); that span reads GVS.

Belongs to the tetrahydrofolate dehydrogenase/cyclohydrolase family. As to quaternary structure, homodimer.

It carries out the reaction (6R)-5,10-methylene-5,6,7,8-tetrahydrofolate + NADP(+) = (6R)-5,10-methenyltetrahydrofolate + NADPH. The catalysed reaction is (6R)-5,10-methenyltetrahydrofolate + H2O = (6R)-10-formyltetrahydrofolate + H(+). It functions in the pathway one-carbon metabolism; tetrahydrofolate interconversion. Functionally, catalyzes the oxidation of 5,10-methylenetetrahydrofolate to 5,10-methenyltetrahydrofolate and then the hydrolysis of 5,10-methenyltetrahydrofolate to 10-formyltetrahydrofolate. The polypeptide is Bifunctional protein FolD (Xanthomonas oryzae pv. oryzae (strain PXO99A)).